The following is a 375-amino-acid chain: Queuine tRNA-ribosyltransferase (375 aa).

The active-site Proton acceptor is the Asp90. Substrate contacts are provided by residues 90 to 94 (DSGGF), Asp144, Gln193, and Gly220. Positions 251-257 (GVGTPED) are RNA binding. Asp270 acts as the Nucleophile in catalysis. Residues 275-279 (TRNAR) are RNA binding; important for wobble base 34 recognition. Residues Cys308, Cys310, Cys313, and His339 each contribute to the Zn(2+) site.

Belongs to the queuine tRNA-ribosyltransferase family. In terms of assembly, homodimer. Within each dimer, one monomer is responsible for RNA recognition and catalysis, while the other monomer binds to the replacement base PreQ1. It depends on Zn(2+) as a cofactor.

It carries out the reaction 7-aminomethyl-7-carbaguanine + guanosine(34) in tRNA = 7-aminomethyl-7-carbaguanosine(34) in tRNA + guanine. The protein operates within tRNA modification; tRNA-queuosine biosynthesis. Catalyzes the base-exchange of a guanine (G) residue with the queuine precursor 7-aminomethyl-7-deazaguanine (PreQ1) at position 34 (anticodon wobble position) in tRNAs with GU(N) anticodons (tRNA-Asp, -Asn, -His and -Tyr). Catalysis occurs through a double-displacement mechanism. The nucleophile active site attacks the C1' of nucleotide 34 to detach the guanine base from the RNA, forming a covalent enzyme-RNA intermediate. The proton acceptor active site deprotonates the incoming PreQ1, allowing a nucleophilic attack on the C1' of the ribose to form the product. After dissociation, two additional enzymatic reactions on the tRNA convert PreQ1 to queuine (Q), resulting in the hypermodified nucleoside queuosine (7-(((4,5-cis-dihydroxy-2-cyclopenten-1-yl)amino)methyl)-7-deazaguanosine). This chain is Queuine tRNA-ribosyltransferase, found in Janthinobacterium sp. (strain Marseille) (Minibacterium massiliensis).